The primary structure comprises 752 residues: F-box and WD repeat domain containing protein 10B (752 aa).

WD repeat units follow at residues 169–206 (GLNQ…TSLP), 451–490 (GHAG…CTRI), 493–532 (GHQG…KTFR), 534–569 (KDPI…LVKT), 572–609 (GHEG…ERCL), and 611–652 (AFKH…KVIK).

In terms of tissue distribution, expressed in pancreas, heart and skeletal muscle.

The chain is F-box and WD repeat domain containing protein 10B from Homo sapiens (Human).